Reading from the N-terminus, the 487-residue chain is Protein nucleotidyltransferase YdiU (487 aa).

Residues Gly86, Gly88, Arg89, Lys109, Asp121, Gly122, Arg172, and Arg179 each coordinate ATP. The active-site Proton acceptor is Asp248. Mg(2+)-binding residues include Asn249 and Asp258. An ATP-binding site is contributed by Asp258.

Belongs to the SELO family. Mg(2+) is required as a cofactor. Mn(2+) serves as cofactor.

The enzyme catalyses L-seryl-[protein] + ATP = 3-O-(5'-adenylyl)-L-seryl-[protein] + diphosphate. It carries out the reaction L-threonyl-[protein] + ATP = 3-O-(5'-adenylyl)-L-threonyl-[protein] + diphosphate. The catalysed reaction is L-tyrosyl-[protein] + ATP = O-(5'-adenylyl)-L-tyrosyl-[protein] + diphosphate. It catalyses the reaction L-histidyl-[protein] + UTP = N(tele)-(5'-uridylyl)-L-histidyl-[protein] + diphosphate. The enzyme catalyses L-seryl-[protein] + UTP = O-(5'-uridylyl)-L-seryl-[protein] + diphosphate. It carries out the reaction L-tyrosyl-[protein] + UTP = O-(5'-uridylyl)-L-tyrosyl-[protein] + diphosphate. Functionally, nucleotidyltransferase involved in the post-translational modification of proteins. It can catalyze the addition of adenosine monophosphate (AMP) or uridine monophosphate (UMP) to a protein, resulting in modifications known as AMPylation and UMPylation. The protein is Protein nucleotidyltransferase YdiU of Sphingopyxis alaskensis (strain DSM 13593 / LMG 18877 / RB2256) (Sphingomonas alaskensis).